Consider the following 91-residue polypeptide: Small ribosomal subunit protein uS15c (91 aa).

It belongs to the universal ribosomal protein uS15 family. In terms of assembly, part of the 30S ribosomal subunit.

Its subcellular location is the plastid. It is found in the chloroplast. This Ceratophyllum demersum (Rigid hornwort) protein is Small ribosomal subunit protein uS15c (rps15).